We begin with the raw amino-acid sequence, 271 residues long: Beta-lactamase (271 aa).

S46 functions as the Acyl-ester intermediate in the catalytic mechanism. 210 to 212 (KTG) provides a ligand contact to substrate.

Belongs to the class-A beta-lactamase family. As to quaternary structure, monomer.

The enzyme catalyses a beta-lactam + H2O = a substituted beta-amino acid. Functionally, hydrolyzes broad-spectrum beta-lactam antibiotics. Active against cephalosporins. This chain is Beta-lactamase, found in Proteus vulgaris.